The following is a 159-amino-acid chain: Phosphopantetheine adenylyltransferase (159 aa).

Position 9 (Thr-9) interacts with substrate. Residues 9–10 (TF) and His-17 contribute to the ATP site. Positions 41, 73, and 87 each coordinate substrate. ATP contacts are provided by residues 88–90 (GLR), Glu-98, and 123–129 (YSFISST).

This sequence belongs to the bacterial CoaD family. As to quaternary structure, homohexamer. It depends on Mg(2+) as a cofactor.

It is found in the cytoplasm. The catalysed reaction is (R)-4'-phosphopantetheine + ATP + H(+) = 3'-dephospho-CoA + diphosphate. Its pathway is cofactor biosynthesis; coenzyme A biosynthesis; CoA from (R)-pantothenate: step 4/5. Functionally, reversibly transfers an adenylyl group from ATP to 4'-phosphopantetheine, yielding dephospho-CoA (dPCoA) and pyrophosphate. This is Phosphopantetheine adenylyltransferase from Pseudomonas aeruginosa (strain LESB58).